Consider the following 230-residue polypeptide: Cell division ATP-binding protein FtsE (230 aa).

The region spanning 3–228 (ITLDHVTKQY…RDEQRGVYGM (226 aa)) is the ABC transporter domain. Residue 37–44 (GPSGSGKS) coordinates ATP.

The protein belongs to the ABC transporter superfamily. As to quaternary structure, homodimer. Forms a membrane-associated complex with FtsX.

It localises to the cell membrane. Part of the ABC transporter FtsEX involved in cellular division. Has ATPase activity. This Mycobacterium tuberculosis (strain ATCC 25618 / H37Rv) protein is Cell division ATP-binding protein FtsE.